We begin with the raw amino-acid sequence, 348 residues long: Dihydroorotase (348 aa).

2 residues coordinate Zn(2+): H17 and H19. Substrate contacts are provided by residues 19-21 (HLR) and N45. K103, H140, and H178 together coordinate Zn(2+). Position 103 is an N6-carboxylysine (K103). Substrate is bound at residue H140. L223 provides a ligand contact to substrate. D251 contacts Zn(2+). Residue D251 is part of the active site. 2 residues coordinate substrate: H255 and A267.

The protein belongs to the metallo-dependent hydrolases superfamily. DHOase family. Class II DHOase subfamily. As to quaternary structure, homodimer. It depends on Zn(2+) as a cofactor.

The catalysed reaction is (S)-dihydroorotate + H2O = N-carbamoyl-L-aspartate + H(+). The protein operates within pyrimidine metabolism; UMP biosynthesis via de novo pathway; (S)-dihydroorotate from bicarbonate: step 3/3. Catalyzes the reversible cyclization of carbamoyl aspartate to dihydroorotate. The sequence is that of Dihydroorotase from Serratia proteamaculans (strain 568).